The sequence spans 500 residues: NAD(P)H-quinone oxidoreductase chain 4, chloroplastic (500 aa).

14 consecutive transmembrane segments (helical) span residues 4 to 24, 35 to 55, 87 to 107, 113 to 130, 134 to 154, 167 to 187, 208 to 228, 242 to 262, 272 to 292, 305 to 325, 330 to 350, 386 to 406, 416 to 436, and 462 to 482; these read FPWLTIIVVFPIFAGSLIFFL, YTICICILELLLTTYAFCYHF, IGPILLTGFITTLATLAAWPV, LFHFLMLAMYSGQIGLFS, LLLFFIMWELELIPVYLLLAM, FILYTAGGSVFLLMGVLGVAL, VLEIIFYIGFFIAFAVKSPII, HYSTCMLLAGILLKMGAYGLI, AHSIFSPWLMIIGTIQIIYAA, IAYSSVSHMGFIIIGISSLTD, GALLQIISHGFIGAALFFLAG, LALPGMSGFVAELIVFFGIIT, LLITFVMAIGIILTPIYSLSM, and LFLSISIFLPVIGIGIYPDFV.

This sequence belongs to the complex I subunit 4 family.

Its subcellular location is the plastid. It localises to the chloroplast thylakoid membrane. The enzyme catalyses a plastoquinone + NADH + (n+1) H(+)(in) = a plastoquinol + NAD(+) + n H(+)(out). The catalysed reaction is a plastoquinone + NADPH + (n+1) H(+)(in) = a plastoquinol + NADP(+) + n H(+)(out). The polypeptide is NAD(P)H-quinone oxidoreductase chain 4, chloroplastic (Solanum lycopersicum (Tomato)).